We begin with the raw amino-acid sequence, 130 residues long: MPYDYDLRCPCGTGLTYGQCCHRYHAGNHHAPTAEALMRSRFTAFAAGETDYLLDTWDPATRPAELTLDDRLEFYRLEILETEGGGPFDATGRVKFQAFHRGLADGVQEEDSTFRKMDGRWVYSLGDVAE.

It belongs to the UPF0225 family.

The sequence is that of UPF0225 protein CE1570 from Corynebacterium efficiens (strain DSM 44549 / YS-314 / AJ 12310 / JCM 11189 / NBRC 100395).